A 697-amino-acid polypeptide reads, in one-letter code: Elongation factor G 2 (697 aa).

Residues 5–280 form the tr-type G domain; that stretch reads SKYRNIGIFA…AVVDYLPAPD (276 aa). GTP contacts are provided by residues 14–21, 78–82, and 132–135; these read AHVDAGKT, DTPGH, and NKLD.

This sequence belongs to the TRAFAC class translation factor GTPase superfamily. Classic translation factor GTPase family. EF-G/EF-2 subfamily.

The protein resides in the cytoplasm. Functionally, catalyzes the GTP-dependent ribosomal translocation step during translation elongation. During this step, the ribosome changes from the pre-translocational (PRE) to the post-translocational (POST) state as the newly formed A-site-bound peptidyl-tRNA and P-site-bound deacylated tRNA move to the P and E sites, respectively. Catalyzes the coordinated movement of the two tRNA molecules, the mRNA and conformational changes in the ribosome. The chain is Elongation factor G 2 from Shewanella sp. (strain MR-7).